The chain runs to 303 residues: Aspartate carbamoyltransferase catalytic subunit (303 aa).

The carbamoyl phosphate site is built by Arg-54 and Thr-55. Lys-83 contacts L-aspartate. Residues Arg-104, His-132, and Gln-135 each contribute to the carbamoyl phosphate site. L-aspartate-binding residues include Arg-164 and Arg-226. Carbamoyl phosphate contacts are provided by Leu-265 and Pro-266.

Belongs to the aspartate/ornithine carbamoyltransferase superfamily. ATCase family. Heterooligomer of catalytic and regulatory chains.

The enzyme catalyses carbamoyl phosphate + L-aspartate = N-carbamoyl-L-aspartate + phosphate + H(+). It participates in pyrimidine metabolism; UMP biosynthesis via de novo pathway; (S)-dihydroorotate from bicarbonate: step 2/3. In terms of biological role, catalyzes the condensation of carbamoyl phosphate and aspartate to form carbamoyl aspartate and inorganic phosphate, the committed step in the de novo pyrimidine nucleotide biosynthesis pathway. The polypeptide is Aspartate carbamoyltransferase catalytic subunit (Methanocorpusculum labreanum (strain ATCC 43576 / DSM 4855 / Z)).